The primary structure comprises 400 residues: Homoserine O-acetyltransferase (400 aa).

A disordered region spans residues 1–22; it reads MMNVHPVKGPVATGGERPHEAD. The region spanning 64–374 is the AB hydrolase-1 domain; sequence NAILVCHALT…DKGHDAFLLD (311 aa). Ser169 serves as the catalytic Nucleophile. Arg239 provides a ligand contact to substrate. Residues Asp335 and His368 contribute to the active site. Asp369 lines the substrate pocket.

The protein belongs to the AB hydrolase superfamily. MetX family. As to quaternary structure, homodimer.

Its subcellular location is the cytoplasm. The enzyme catalyses L-homoserine + acetyl-CoA = O-acetyl-L-homoserine + CoA. The protein operates within amino-acid biosynthesis; L-methionine biosynthesis via de novo pathway; O-acetyl-L-homoserine from L-homoserine: step 1/1. Its function is as follows. Transfers an acetyl group from acetyl-CoA to L-homoserine, forming acetyl-L-homoserine. In Rhodopseudomonas palustris (strain HaA2), this protein is Homoserine O-acetyltransferase.